A 102-amino-acid chain; its full sequence is Small ribosomal subunit protein uS10 (102 aa).

It belongs to the universal ribosomal protein uS10 family. Part of the 30S ribosomal subunit.

Involved in the binding of tRNA to the ribosomes. The sequence is that of Small ribosomal subunit protein uS10 from Brevibacillus brevis (strain 47 / JCM 6285 / NBRC 100599).